A 190-amino-acid chain; its full sequence is UPF0200 protein OE_4442F (190 aa).

8–15 provides a ligand contact to ATP; that stretch reads GMPGSGKS. The segment at 120–144 is disordered; the sequence is ARIEDRDRPGDTDGEPLDAREDRER.

It belongs to the UPF0200 family.

This chain is UPF0200 protein OE_4442F, found in Halobacterium salinarum (strain ATCC 29341 / DSM 671 / R1).